Here is a 328-residue protein sequence, read N- to C-terminus: MINIAIDAMGGDFGEKPIIEGVLKALEAKPFNAILVGNSKILKPLIPKKLEQYIQYEEANEIFSMNENATDALKNKETTIYKAINLLKEKKVDAVVSAGHSGASMSLATLRLGRLKGISRPAIATLMPNIVSKTLLLDVGANTDCKAENLFQFAIMGEVYAREIMQIQKPRLALLSNGEEECKGNELTKESHQLMKKIPNFIGNAEGRDIFNGEIDVLVCDGFDGNVILKACEGVATAIFQLLKNEVKRSFISKIGALLIKPSFKKLKKHTDWQEYGGAPLLGVNGCVIISHGKSDSRAIKNAIFQAVNFSQSHINELIENELGKYNA.

It belongs to the PlsX family. As to quaternary structure, homodimer. Probably interacts with PlsY.

The protein resides in the cytoplasm. The enzyme catalyses a fatty acyl-[ACP] + phosphate = an acyl phosphate + holo-[ACP]. The protein operates within lipid metabolism; phospholipid metabolism. Functionally, catalyzes the reversible formation of acyl-phosphate (acyl-PO(4)) from acyl-[acyl-carrier-protein] (acyl-ACP). This enzyme utilizes acyl-ACP as fatty acyl donor, but not acyl-CoA. This chain is Phosphate acyltransferase, found in Campylobacter jejuni subsp. doylei (strain ATCC BAA-1458 / RM4099 / 269.97).